The primary structure comprises 103 residues: Large ribosomal subunit protein bL21 (103 aa).

The protein belongs to the bacterial ribosomal protein bL21 family. In terms of assembly, part of the 50S ribosomal subunit. Contacts protein L20.

This protein binds to 23S rRNA in the presence of protein L20. The polypeptide is Large ribosomal subunit protein bL21 (Parvibaculum lavamentivorans (strain DS-1 / DSM 13023 / NCIMB 13966)).